Reading from the N-terminus, the 778-residue chain is E3 UFM1-protein ligase 1 homolog (778 aa).

The interval asparagine 404 to arginine 477 is disordered. Over residues lysine 445–alanine 457 the composition is skewed to basic residues.

This sequence belongs to the UFL1 family.

Functionally, E3 UFM1-protein ligase that mediates ufmylation of target proteins. The protein is E3 UFM1-protein ligase 1 homolog of Drosophila virilis (Fruit fly).